A 131-amino-acid polypeptide reads, in one-letter code: Biogenesis of lysosome-related organelles complex 1 subunit 5 (131 aa).

The protein belongs to the BLOC1S5 family. In terms of assembly, component of the biogenesis of lysosome-related organelles complex-1 (BLOC-1) composed at least of blos-1, blos-2, blos-4, dsbn-1, glo-2, mutd-1 and snpn-1.

Its function is as follows. Component of the biogenesis of lysosome-related organelles complex-1 (BLOC-1) involved in gut granule biogenesis. The polypeptide is Biogenesis of lysosome-related organelles complex 1 subunit 5 (mutd-1) (Caenorhabditis elegans).